We begin with the raw amino-acid sequence, 267 residues long: 27 kDa primary mesenchyme-specific spicule protein (267 aa).

Positions 1–16 (MKLLAILLVLPALCFG) are cleaved as a signal peptide. Residues 20 to 64 (EGPGMGPGMGPGMGPGMGPGMGPGMGPGMGPGMGPGQGQGQGQGQ) are 11 X 4 AA tandem repeats of G-[PQ]-G-[MQ]. A run of 11 repeats spans residues 21–24 (GPGM), 25–28 (GPGM), 29–32 (GPGM), 33–36 (GPGM), 37–40 (GPGM), 41–44 (GPGM), 45–48 (GPGM), 49–52 (GPGM), 53–56 (GPGQ), 57–60 (GQGQ), and 61–64 (GQGQ). A disordered region spans residues 44–68 (MGPGMGPGMGPGQGQGQGQGQGQVG). Residues 79–220 (IGQQCFKMMS…CDEPMYFACS (142 aa)) enclose the C-type lectin domain. 2 disulfides stabilise this stretch: C100–C219 and C197–C211.

As to expression, expressed specifically in the micromere/primary mesenchyme cells (PMC) lineage. Produced uniformly and exclusively by PMCs through the early prism stage and this specificity is further restricted during skeletogenesis to a subpopulation of PMCs associated with the growing tips of the spicules.

Its subcellular location is the secreted. Functionally, may play a role in the regulation or execution of skeletal growth. The polypeptide is 27 kDa primary mesenchyme-specific spicule protein (PM27) (Strongylocentrotus purpuratus (Purple sea urchin)).